The primary structure comprises 123 residues: Small ribosomal subunit protein uS12 (123 aa).

Over residues 10 to 20 (KGRKKVKKKKT) the composition is skewed to basic residues. Residues 10-32 (KGRKKVKKKKTAPALQGSPQKRG) form a disordered region. A 3-methylthioaspartic acid modification is found at D89.

This sequence belongs to the universal ribosomal protein uS12 family. Part of the 30S ribosomal subunit. Contacts proteins S8 and S17. May interact with IF1 in the 30S initiation complex.

Functionally, with S4 and S5 plays an important role in translational accuracy. In terms of biological role, interacts with and stabilizes bases of the 16S rRNA that are involved in tRNA selection in the A site and with the mRNA backbone. Located at the interface of the 30S and 50S subunits, it traverses the body of the 30S subunit contacting proteins on the other side and probably holding the rRNA structure together. The combined cluster of proteins S8, S12 and S17 appears to hold together the shoulder and platform of the 30S subunit. The sequence is that of Small ribosomal subunit protein uS12 from Halothermothrix orenii (strain H 168 / OCM 544 / DSM 9562).